The following is a 252-amino-acid chain: uncharacterized protein (252 aa).

The signal sequence occupies residues M1 to A23. A disordered region spans residues E231–M252.

This is an uncharacterized protein from Escherichia coli (strain K12).